The following is a 159-amino-acid chain: Ribosomal RNA large subunit methyltransferase H (159 aa).

Residues Gly108 and Phe127–Phe132 contribute to the S-adenosyl-L-methionine site.

The protein belongs to the RNA methyltransferase RlmH family. In terms of assembly, homodimer.

It localises to the cytoplasm. The catalysed reaction is pseudouridine(1915) in 23S rRNA + S-adenosyl-L-methionine = N(3)-methylpseudouridine(1915) in 23S rRNA + S-adenosyl-L-homocysteine + H(+). Its function is as follows. Specifically methylates the pseudouridine at position 1915 (m3Psi1915) in 23S rRNA. The polypeptide is Ribosomal RNA large subunit methyltransferase H (Magnetococcus marinus (strain ATCC BAA-1437 / JCM 17883 / MC-1)).